Here is a 174-residue protein sequence, read N- to C-terminus: Small ribosomal subunit protein uS5 (174 aa).

Positions 16–79 (LSELLVSVRR…NAAKKSMIRV (64 aa)) constitute an S5 DRBM domain.

The protein belongs to the universal ribosomal protein uS5 family. Part of the 30S ribosomal subunit. Contacts proteins S4 and S8.

Its function is as follows. With S4 and S12 plays an important role in translational accuracy. In terms of biological role, located at the back of the 30S subunit body where it stabilizes the conformation of the head with respect to the body. The sequence is that of Small ribosomal subunit protein uS5 from Anaplasma marginale (strain Florida).